The primary structure comprises 441 residues: D-inositol 3-phosphate glycosyltransferase (441 aa).

Histidine 38 lines the 1D-myo-inositol 3-phosphate pocket. Residues 44–45 (QP) and glycine 52 each bind UDP-N-acetyl-alpha-D-glucosamine. 1D-myo-inositol 3-phosphate contacts are provided by residues 49-54 (DAGGMN), lysine 107, tyrosine 140, threonine 164, and arginine 184. UDP-N-acetyl-alpha-D-glucosamine is bound by residues arginine 258, lysine 263, and glutamine 316. Mg(2+)-binding residues include phenylalanine 325, glutamine 326, and alanine 328. Glutamate 338 and glutamate 346 together coordinate UDP-N-acetyl-alpha-D-glucosamine. A Mg(2+)-binding site is contributed by threonine 352.

This sequence belongs to the glycosyltransferase group 1 family. MshA subfamily. Homodimer.

The enzyme catalyses 1D-myo-inositol 3-phosphate + UDP-N-acetyl-alpha-D-glucosamine = 1D-myo-inositol 2-acetamido-2-deoxy-alpha-D-glucopyranoside 3-phosphate + UDP + H(+). Its function is as follows. Catalyzes the transfer of a N-acetyl-glucosamine moiety to 1D-myo-inositol 3-phosphate to produce 1D-myo-inositol 2-acetamido-2-deoxy-glucopyranoside 3-phosphate in the mycothiol biosynthesis pathway. The polypeptide is D-inositol 3-phosphate glycosyltransferase (Mycolicibacterium paratuberculosis (strain ATCC BAA-968 / K-10) (Mycobacterium paratuberculosis)).